Consider the following 225-residue polypeptide: NAD(P)H-quinone oxidoreductase subunit K, chloroplastic (225 aa).

Residues C43, C44, C108, and C139 each coordinate [4Fe-4S] cluster.

Belongs to the complex I 20 kDa subunit family. In terms of assembly, NDH is composed of at least 16 different subunits, 5 of which are encoded in the nucleus. The cofactor is [4Fe-4S] cluster.

Its subcellular location is the plastid. It localises to the chloroplast thylakoid membrane. It catalyses the reaction a plastoquinone + NADH + (n+1) H(+)(in) = a plastoquinol + NAD(+) + n H(+)(out). The enzyme catalyses a plastoquinone + NADPH + (n+1) H(+)(in) = a plastoquinol + NADP(+) + n H(+)(out). In terms of biological role, NDH shuttles electrons from NAD(P)H:plastoquinone, via FMN and iron-sulfur (Fe-S) centers, to quinones in the photosynthetic chain and possibly in a chloroplast respiratory chain. The immediate electron acceptor for the enzyme in this species is believed to be plastoquinone. Couples the redox reaction to proton translocation, and thus conserves the redox energy in a proton gradient. The polypeptide is NAD(P)H-quinone oxidoreductase subunit K, chloroplastic (Capsella bursa-pastoris (Shepherd's purse)).